We begin with the raw amino-acid sequence, 418 residues long: Dwarfin sma-2 (418 aa).

The MH1 domain maps to 8 to 134 (KKITERLKWK…YKRVHATGVL (127 aa)). Residues cysteine 62, cysteine 107, cysteine 119, and histidine 124 each contribute to the Zn(2+) site. The MH2 domain occupies 222 to 418 (WATVSYYELN…PTPRPISSIS (197 aa)).

The protein belongs to the dwarfin/SMAD family.

Its subcellular location is the cytoplasm. It localises to the nucleus. Its function is as follows. Involved in TGF-beta pathway. Plays a role in male tail tip morphogenesis. The protein is Dwarfin sma-2 of Caenorhabditis elegans.